The chain runs to 1404 residues: Clustered mitochondria protein homolog (1404 aa).

Residues 357 to 646 form the Clu domain; the sequence is HTHHADALRS…RLNPVDINWL (290 aa). Acidic residues predominate over residues 528-540; it reads ADELPEADGETTE. Disordered regions lie at residues 528 to 561, 706 to 735, 996 to 1046, and 1337 to 1372; these read ADELPEADGETTELAEAAPEKKSPEAKLAQSNKA, DAKAKEAASKEDGEKTEAPEVEAEEPERLD, GCHG…ARAT, and SERQARLPASRRGNSNAGGGAAAITGAGTTASGNGT. The span at 706–723 shows a compositional bias: basic and acidic residues; sequence DAKAKEAASKEDGEKTEA. Low complexity-rich tracts occupy residues 1021 to 1046 and 1358 to 1372; these read NEQQNGVKKSNVGAAAAKPTKAARAT and AAITGAGTTASGNGT.

This sequence belongs to the CLU family. In terms of assembly, may associate with the eukaryotic translation initiation factor 3 (eIF-3) complex.

The protein localises to the cytoplasm. Its function is as follows. mRNA-binding protein involved in proper cytoplasmic distribution of mitochondria. In Mycosarcoma maydis (Corn smut fungus), this protein is Clustered mitochondria protein homolog.